We begin with the raw amino-acid sequence, 501 residues long: Ribose import ATP-binding protein RbsA (501 aa).

ABC transporter domains follow at residues 5-241 and 252-495; these read LQLK…VGRK and APGE…VGKL. Residue 37-44 participates in ATP binding; that stretch reads GENGAGKS.

The protein belongs to the ABC transporter superfamily. Ribose importer (TC 3.A.1.2.1) family. The complex is composed of an ATP-binding protein (RbsA), two transmembrane proteins (RbsC) and a solute-binding protein (RbsB).

Its subcellular location is the cell inner membrane. It carries out the reaction D-ribose(out) + ATP + H2O = D-ribose(in) + ADP + phosphate + H(+). Its function is as follows. Part of the ABC transporter complex RbsABC involved in ribose import. Responsible for energy coupling to the transport system. This Salmonella paratyphi A (strain ATCC 9150 / SARB42) protein is Ribose import ATP-binding protein RbsA.